A 164-amino-acid chain; its full sequence is FMN reductase (NADH) RutF (164 aa).

This sequence belongs to the non-flavoprotein flavin reductase family. RutF subfamily.

It catalyses the reaction FMNH2 + NAD(+) = FMN + NADH + 2 H(+). Its function is as follows. Catalyzes the reduction of FMN to FMNH2 which is used to reduce pyrimidine by RutA via the Rut pathway. This is FMN reductase (NADH) RutF from Enterobacter sp. (strain 638).